A 336-amino-acid polypeptide reads, in one-letter code: Holliday junction branch migration complex subunit RuvB (336 aa).

The segment at 1–182 (MKERIVNLET…FGMSFRMQFY (182 aa)) is large ATPase domain (RuvB-L). Residues leucine 21, arginine 22, glycine 63, lysine 66, threonine 67, serine 68, 129–131 (EDF), arginine 172, tyrosine 182, and arginine 219 each bind ATP. Threonine 67 contacts Mg(2+). A small ATPAse domain (RuvB-S) region spans residues 183-253 (SPSELSLIIK…ITLHALNELG (71 aa)). The tract at residues 256–336 (ELGFDEADLA…IPTLNPQTLF (81 aa)) is head domain (RuvB-H). 2 residues coordinate DNA: arginine 310 and arginine 315.

Belongs to the RuvB family. Homohexamer. Forms an RuvA(8)-RuvB(12)-Holliday junction (HJ) complex. HJ DNA is sandwiched between 2 RuvA tetramers; dsDNA enters through RuvA and exits via RuvB. An RuvB hexamer assembles on each DNA strand where it exits the tetramer. Each RuvB hexamer is contacted by two RuvA subunits (via domain III) on 2 adjacent RuvB subunits; this complex drives branch migration. In the full resolvosome a probable DNA-RuvA(4)-RuvB(12)-RuvC(2) complex forms which resolves the HJ.

The protein localises to the cytoplasm. The enzyme catalyses ATP + H2O = ADP + phosphate + H(+). Its function is as follows. The RuvA-RuvB-RuvC complex processes Holliday junction (HJ) DNA during genetic recombination and DNA repair, while the RuvA-RuvB complex plays an important role in the rescue of blocked DNA replication forks via replication fork reversal (RFR). RuvA specifically binds to HJ cruciform DNA, conferring on it an open structure. The RuvB hexamer acts as an ATP-dependent pump, pulling dsDNA into and through the RuvAB complex. RuvB forms 2 homohexamers on either side of HJ DNA bound by 1 or 2 RuvA tetramers; 4 subunits per hexamer contact DNA at a time. Coordinated motions by a converter formed by DNA-disengaged RuvB subunits stimulates ATP hydrolysis and nucleotide exchange. Immobilization of the converter enables RuvB to convert the ATP-contained energy into a lever motion, pulling 2 nucleotides of DNA out of the RuvA tetramer per ATP hydrolyzed, thus driving DNA branch migration. The RuvB motors rotate together with the DNA substrate, which together with the progressing nucleotide cycle form the mechanistic basis for DNA recombination by continuous HJ branch migration. Branch migration allows RuvC to scan DNA until it finds its consensus sequence, where it cleaves and resolves cruciform DNA. In Helicobacter pylori (strain P12), this protein is Holliday junction branch migration complex subunit RuvB.